The primary structure comprises 654 residues: Acetyl-coenzyme A synthetase (654 aa).

CoA contacts are provided by residues 191–194 (RRGQ) and Thr-315. Residues 391–393 (GEP), 415–420 (DTWWQT), Asp-506, and Arg-521 each bind ATP. CoA is bound at residue Ser-529. Arg-532 contributes to the ATP binding site. Val-543, His-545, and Val-548 together coordinate Mg(2+). Position 615 is an N6-acetyllysine (Lys-615).

It belongs to the ATP-dependent AMP-binding enzyme family. Mg(2+) is required as a cofactor. In terms of processing, acetylated. Deacetylation by the SIR2-homolog deacetylase activates the enzyme.

It catalyses the reaction acetate + ATP + CoA = acetyl-CoA + AMP + diphosphate. Catalyzes the conversion of acetate into acetyl-CoA (AcCoA), an essential intermediate at the junction of anabolic and catabolic pathways. AcsA undergoes a two-step reaction. In the first half reaction, AcsA combines acetate with ATP to form acetyl-adenylate (AcAMP) intermediate. In the second half reaction, it can then transfer the acetyl group from AcAMP to the sulfhydryl group of CoA, forming the product AcCoA. This is Acetyl-coenzyme A synthetase from Gemmatimonas aurantiaca (strain DSM 14586 / JCM 11422 / NBRC 100505 / T-27).